The primary structure comprises 316 residues: Small ribosomal subunit biogenesis GTPase RsgA (316 aa).

The region spanning 83–248 (DQYKSKLFAA…LIDSPGFQEF (166 aa)) is the CP-type G domain. GTP is bound by residues 131–134 (NKTD) and 185–193 (GQSGMGKST). Residues Cys-272, Cys-277, His-279, and Cys-285 each contribute to the Zn(2+) site.

Belongs to the TRAFAC class YlqF/YawG GTPase family. RsgA subfamily. As to quaternary structure, monomer. Associates with 30S ribosomal subunit, binds 16S rRNA. It depends on Zn(2+) as a cofactor.

The protein localises to the cytoplasm. In terms of biological role, one of several proteins that assist in the late maturation steps of the functional core of the 30S ribosomal subunit. Helps release RbfA from mature subunits. May play a role in the assembly of ribosomal proteins into the subunit. Circularly permuted GTPase that catalyzes slow GTP hydrolysis, GTPase activity is stimulated by the 30S ribosomal subunit. In Paraburkholderia xenovorans (strain LB400), this protein is Small ribosomal subunit biogenesis GTPase RsgA.